Here is a 292-residue protein sequence, read N- to C-terminus: Glycine--tRNA ligase alpha subunit (292 aa).

Belongs to the class-II aminoacyl-tRNA synthetase family. Tetramer of two alpha and two beta subunits.

It is found in the cytoplasm. It catalyses the reaction tRNA(Gly) + glycine + ATP = glycyl-tRNA(Gly) + AMP + diphosphate. This chain is Glycine--tRNA ligase alpha subunit, found in Geobacter sulfurreducens (strain ATCC 51573 / DSM 12127 / PCA).